The primary structure comprises 489 residues: MAYIQASSTQAVVVLLLVLVLTKIYRVYTGPLAHLPGPAISKWTGLVLQKHLFAGNRPRYVQKLHQLYGPIVRISPDELDVSDSAAAKSIHRVASRFYKGRFYEHIGHRSPKTLFSSTDPQFHAYRRRLLGGAMSETSIRQHEPTVAQKVKLCVDQMAREAERRGCIDVFKWWCFLATDTIGELSFGESFRMLEKGEKSQYSRDLELVSTLMIIRTTFPFLSRVAEYVPLPYFKQAAQSGKRMFGYASESIQRYKKHVEMKGXXXXXXXXXXXXXXXXXEGSLTEAEIRLEAGGYIVAGSDTSAISLTYLVWAVCKNPLIRDSLVAEVATLPEDFTDDDVRALPYTRRVIDETLRLYPAVPGALPRAVPPEGATLVDHFIPGGVTVSTQVYSLHRDPKIFPDPDRRFDPDRWIDPTTEMRDSFMPFGGGSRTCIGMHLARMELRLATAHFFRRFTSPTVSTKEGFTDDDMYQHMYFLVSPKGHRCLIDV.

Cys-433 serves as a coordination point for heme.

It belongs to the cytochrome P450 family. Heme is required as a cofactor.

It participates in secondary metabolite biosynthesis. In terms of biological role, cytochrome P450 monooxygenase; part of the gene cluster that mediates the biosynthesis of azaterrilone A and other azaphilones, a class of fungal metabolites characterized by a highly oxygenated pyrano-quinone bicyclic core and exhibiting a broad range of bioactivities. The first step of the pathway begins with the non-reducing polyketide synthase tazA that assembles one acetyl-CoA starter unit, five malonyl-CoA units, and catalyzes a series of Claisen condensations, methylation, PT-mediated cyclization, and finally releases the first hexaketide precursor through the R-domain. The tazA product then undergoes reduction on its terminal ketone and the following pyran-ring formation by yet undetermined enzyme(s). Dehydration and enoyl reduction, possibly involving the trans-enoyl reductase tazE leads to the next intermediate. TazD is predicted as an acetyltransferase and might catalyze the acetylation steps leading to the synthesis of azaterrilone A. Azaterrilone A is not the final product of the taz pathway and both the highly reducing polyketide synthase tazB and the dual enzyme tazHJ catalyze late steps of the pathway, leading to the production of the 2 final stereoisomers that contain additional polyketide modification whose structures have still to be determined. In Aspergillus terreus (strain NIH 2624 / FGSC A1156), this protein is Cytochrome P450 monooxygenase tazI.